Consider the following 130-residue polypeptide: Blasticidin-S deaminase (130 aa).

The CMP/dCMP-type deaminase domain maps to 1–129 (MPLSQEESTL…ELLPSGYVWE (129 aa)). Substrate is bound at residue Ser28. Cys54 is a Zn(2+) binding site. Catalysis depends on Glu56, which acts as the Proton donor. Arg82 contributes to the substrate binding site. Residues Cys88 and Cys91 each contribute to the Zn(2+) site. Substrate-binding residues include Tyr126 and Trp128.

It belongs to the cytidine and deoxycytidylate deaminase family. In terms of assembly, homotetramer. The cofactor is Zn(2+).

The catalysed reaction is blasticidin S + H2O + H(+) = deaminohydroxyblasticidin S + NH4(+). Functionally, catalyzes the deamination of the cytosine moiety of the antibiotics blasticidin S, cytomycin and acetylblasticidin S. This Aspergillus terreus protein is Blasticidin-S deaminase (bsd).